Reading from the N-terminus, the 501-residue chain is Glycerol kinase (501 aa).

T11 contributes to the ADP binding site. Positions 11, 12, and 13 each coordinate ATP. T11 provides a ligand contact to sn-glycerol 3-phosphate. ADP is bound at residue R15. Sn-glycerol 3-phosphate-binding residues include R81, E82, Y133, and D242. Residues R81, E82, Y133, D242, and Q243 each coordinate glycerol. 2 residues coordinate ADP: T264 and G307. ATP-binding residues include T264, G307, Q311, and G409. ADP-binding residues include G409 and N413.

It belongs to the FGGY kinase family.

The catalysed reaction is glycerol + ATP = sn-glycerol 3-phosphate + ADP + H(+). Its pathway is polyol metabolism; glycerol degradation via glycerol kinase pathway; sn-glycerol 3-phosphate from glycerol: step 1/1. Its activity is regulated as follows. Inhibited by fructose 1,6-bisphosphate (FBP). Functionally, key enzyme in the regulation of glycerol uptake and metabolism. Catalyzes the phosphorylation of glycerol to yield sn-glycerol 3-phosphate. This Borrelia garinii subsp. bavariensis (strain ATCC BAA-2496 / DSM 23469 / PBi) (Borreliella bavariensis) protein is Glycerol kinase.